The sequence spans 199 residues: Recombination protein RecR (199 aa).

The segment at Cys-56–Cys-71 adopts a C4-type zinc-finger fold. The region spanning Ser-79 to Pro-174 is the Toprim domain.

It belongs to the RecR family.

May play a role in DNA repair. It seems to be involved in an RecBC-independent recombinational process of DNA repair. It may act with RecF and RecO. The polypeptide is Recombination protein RecR (Nocardioides sp. (strain ATCC BAA-499 / JS614)).